The primary structure comprises 78 residues: Translation initiation factor IF-1, chloroplastic (78 aa).

Residues 1-72 (MEKQKLIDME…TKGRITYRLR (72 aa)) enclose the S1-like domain.

This sequence belongs to the IF-1 family. In terms of assembly, component of the 30S ribosomal translation pre-initiation complex which assembles on the 30S ribosome in the order IF-2 and IF-3, IF-1 and N-formylmethionyl-tRNA(fMet); mRNA recruitment can occur at any time during PIC assembly.

Its subcellular location is the plastid. The protein resides in the chloroplast. Its function is as follows. One of the essential components for the initiation of protein synthesis. Stabilizes the binding of IF-2 and IF-3 on the 30S subunit to which N-formylmethionyl-tRNA(fMet) subsequently binds. Helps modulate mRNA selection, yielding the 30S pre-initiation complex (PIC). Upon addition of the 50S ribosomal subunit IF-1, IF-2 and IF-3 are released leaving the mature 70S translation initiation complex. This Marchantia polymorpha (Common liverwort) protein is Translation initiation factor IF-1, chloroplastic.